A 107-amino-acid chain; its full sequence is Guanine nucleotide-binding protein G(I)/G(S)/G(O) subunit gamma-14 (107 aa).

In terms of domain architecture, G protein gamma spans 69-107 (KMAADLLKFCTEQAKNDPFLVGIPAATNSFKEKKPYAIL).

The protein belongs to the G protein gamma family. G proteins are composed of 3 units; alpha, beta and gamma.

It localises to the cell membrane. Functionally, guanine nucleotide-binding proteins (G proteins) are involved as a modulator or transducer in various transmembrane signaling systems. The beta and gamma chains are required for the GTPase activity, for replacement of GDP by GTP, and for G protein-effector interaction. In Homo sapiens (Human), this protein is Guanine nucleotide-binding protein G(I)/G(S)/G(O) subunit gamma-14.